A 662-amino-acid chain; its full sequence is MAHSSDLALFRHRIAEALPSANVPTLLLLLYQFTGKEYWLTPPFLPVKSVWGDNDSGGLAAELQTEIRNAALDAIICWHSGAPVTKQDLSEEELIRMLTVSEAEPIPPEYADMMLHKLRRYAGAIPDPVSLPKGFRVLIIGAGMSGVAAAIRLRQLGISYIQVEKQDSTGGVWHAHHYPGCGVDTPGHLYSYTFASGNWSTFFPLQKEIDDYFNRVARDFGIESSIRYGTECLVTRYDEESLTWHSRLRLPNGTEETLVTNVVLSAVGGFTTPKWPNLSGLRNFDGPVVHTSKWDPEVALDGKRVAVIGNGASAMQVVPAIADRVGALTIFQRSRQWVAPFPKFQKPVPEPMQFLFREVPHYEWLYRLRLSWIYDSEVHEALQKDPAWPHPDRSVNAVNDRDREAYTQYIEGQLAGRPDLIAKVIPSYPPFGKRMLLDNGWYRTLLKPHVTLVDGAAARVEGRSIHAIDDETHEADLIIVASGYDTTRYLLPVEVIGRNGRTVRDVWDDDDCQAYLGTVVAGFPNFFMLYGPNTALGHRGSFIFTIESQIDYVLSVLRQMGEKRLVEVECRQDIYQHYNRKIQQMHQQMIWSHEGMSTFFRNDRGRIVTNSPWRLVDYWNLLKEADLDDYRTMPQVDSRLETSGVPREGVQRPGSRLRRRPS.

Residues serine 145, glutamate 164, tryptophan 173, aspartate 184, and tyrosine 190 each coordinate FAD. The tract at residues 638–662 (SRLETSGVPREGVQRPGSRLRRRPS) is disordered.

The protein belongs to the FAD-binding monooxygenase family. Requires FAD as cofactor.

This is an uncharacterized protein from Sinorhizobium fredii (strain NBRC 101917 / NGR234).